The primary structure comprises 436 residues: Two-pore potassium channel 3 (436 aa).

The Cytoplasmic portion of the chain corresponds to 1–148 (MANEGSDPLL…QKDPTETSRS (148 aa)). The disordered stretch occupies residues 62–117 (SHFIDSMKQPSPSSSSTAVNNPFSDSSTLDPLLPPPPPQPEPWLSDQTSSHCQGHA). Positions 71–92 (PSPSSSSTAVNNPFSDSSTLDP) are enriched in low complexity. Over residues 93-102 (LLPPPPPQPE) the composition is skewed to pro residues. The helical transmembrane segment at 149–169 (VVRQAFALLVVYLSLGVLIYW) threads the bilayer. Positions 185–204 (DGLYFCIVTMCTIGYGDITP) form an intramembrane region, pore-forming. A helical membrane pass occupies residues 212 to 232 (FSIMFVLVGFGFIDILLSGMV). The Cytoplasmic portion of the chain corresponds to 233-274 (SYVLDLQESYMLDSAKRRDEPEKRRSYIIDVKKGRMRIRLKV). A helical transmembrane segment spans residues 275 to 295 (ALALGVVVLCIAVGVGIMHFI). An intramembrane region (pore-forming) is located at residues 302–321 (DSFYLSVMSVTTVGYGDRAF). The helical transmembrane segment at 328–348 (LFAAIWLLVSTLAVARAFLYL) threads the bilayer. Over 349-436 (AEARVDKRNR…LDLLEGGSGD (88 aa)) the chain is Cytoplasmic. EF-hand domains lie at 365–400 (LCET…EMEK) and 404–436 (KDIL…GSGD). Asp-378, Asp-380, Asn-382, Cys-384, Glu-389, Asp-417, Asn-421, Lys-423, and Asp-428 together coordinate Ca(2+).

This sequence belongs to the two pore domain potassium channel (TC 1.A.1.7) family. As to quaternary structure, homodimer. As to expression, expressed in roots, cotyledons, stems, hypocotyls, leaves and flowers. Detected in root tips and in mesophyll cells and guard cells of the leaves.

The protein localises to the vacuole membrane. It is found in the plastid. Its subcellular location is the chloroplast thylakoid membrane. With respect to regulation, inhibited by barium, but not by tetraethylammonium. Functionally, two-pore potassium channel modulating the proton motive force (pmf) necessary to convert photochemical energy into physiological functions. Mediates the potassium efflux from the thylakoid lumen required for the regulation of the transmembrane electrical potential, the enhancement of the pH gradient for ATP synthesis, the regulation of electron flow, and pH-mediated photoprotective responses. Requires calcium for channel activity. This chain is Two-pore potassium channel 3, found in Arabidopsis thaliana (Mouse-ear cress).